A 182-amino-acid chain; its full sequence is Small ribosomal subunit protein uS4c (182 aa).

The tract at residues 8–36 is disordered; that stretch reads LGALPGLTSKRPGSGSDPKNKSRSGKRSQ. The region spanning 82–143 is the S4 RNA-binding domain; the sequence is MRLDNILFRL…KQRSKALIQN (62 aa).

The protein belongs to the universal ribosomal protein uS4 family. In terms of assembly, part of the 30S ribosomal subunit. Contacts protein S5. The interaction surface between S4 and S5 is involved in control of translational fidelity.

The protein resides in the plastid. It is found in the chloroplast. One of the primary rRNA binding proteins, it binds directly to 16S rRNA where it nucleates assembly of the body of the 30S subunit. In terms of biological role, with S5 and S12 plays an important role in translational accuracy. The chain is Small ribosomal subunit protein uS4c (rps4) from Dietes robinsoniana (Lord Howe wedding lily).